The sequence spans 85 residues: ATP synthase subunit c (85 aa).

2 consecutive transmembrane segments (helical) span residues 10–30 (IAVS…FGIL) and 53–73 (FIVA…ALLF).

This sequence belongs to the ATPase C chain family. In terms of assembly, F-type ATPases have 2 components, F(1) - the catalytic core - and F(0) - the membrane proton channel. F(1) has five subunits: alpha(3), beta(3), gamma(1), delta(1), epsilon(1). F(0) has three main subunits: a(1), b(2) and c(10-14). The alpha and beta chains form an alternating ring which encloses part of the gamma chain. F(1) is attached to F(0) by a central stalk formed by the gamma and epsilon chains, while a peripheral stalk is formed by the delta and b chains.

It is found in the cell inner membrane. Functionally, f(1)F(0) ATP synthase produces ATP from ADP in the presence of a proton or sodium gradient. F-type ATPases consist of two structural domains, F(1) containing the extramembraneous catalytic core and F(0) containing the membrane proton channel, linked together by a central stalk and a peripheral stalk. During catalysis, ATP synthesis in the catalytic domain of F(1) is coupled via a rotary mechanism of the central stalk subunits to proton translocation. In terms of biological role, key component of the F(0) channel; it plays a direct role in translocation across the membrane. A homomeric c-ring of between 10-14 subunits forms the central stalk rotor element with the F(1) delta and epsilon subunits. This chain is ATP synthase subunit c, found in Idiomarina loihiensis (strain ATCC BAA-735 / DSM 15497 / L2-TR).